We begin with the raw amino-acid sequence, 433 residues long: Glutamate-1-semialdehyde 2,1-aminomutase (433 aa).

N6-(pyridoxal phosphate)lysine is present on lysine 267.

It belongs to the class-III pyridoxal-phosphate-dependent aminotransferase family. HemL subfamily. As to quaternary structure, homodimer. The cofactor is pyridoxal 5'-phosphate.

The protein localises to the cytoplasm. The catalysed reaction is (S)-4-amino-5-oxopentanoate = 5-aminolevulinate. Its pathway is porphyrin-containing compound metabolism; protoporphyrin-IX biosynthesis; 5-aminolevulinate from L-glutamyl-tRNA(Glu): step 2/2. The chain is Glutamate-1-semialdehyde 2,1-aminomutase from Syntrophobacter fumaroxidans (strain DSM 10017 / MPOB).